The following is a 413-amino-acid chain: Divalent metal cation transporter MntH (413 aa).

A run of 11 helical transmembrane segments spans residues 19 to 39 (LALM…GNFA), 46 to 66 (ASFG…AMLI), 94 to 114 (VWFY…AEFI), 122 to 142 (LVLG…TFLI), 156 to 176 (VIGG…IFSQ), 196 to 216 (AVFL…IYLH), 241 to 261 (IAMT…AAAF), 290 to 310 (IFGL…TLAG), 329 to 349 (AVTM…TRIL), 350 to 370 (VMSQ…LLIF), and 392 to 412 (VIVA…LLGV).

Belongs to the NRAMP family.

Its subcellular location is the cell inner membrane. In terms of biological role, h(+)-stimulated, divalent metal cation uptake system. This Klebsiella pneumoniae (strain 342) protein is Divalent metal cation transporter MntH.